A 232-amino-acid chain; its full sequence is Flagellar L-ring protein (232 aa).

Positions 1–21 (MQKNAAHTYAISSLLVLSLTG) are cleaved as a signal peptide. A lipid anchor (N-palmitoyl cysteine) is attached at C22. C22 carries S-diacylglycerol cysteine lipidation.

Belongs to the FlgH family. The basal body constitutes a major portion of the flagellar organelle and consists of four rings (L,P,S, and M) mounted on a central rod.

Its subcellular location is the cell outer membrane. The protein resides in the bacterial flagellum basal body. Assembles around the rod to form the L-ring and probably protects the motor/basal body from shearing forces during rotation. The polypeptide is Flagellar L-ring protein (flgH) (Shigella flexneri).